The chain runs to 308 residues: Homoserine O-acetyltransferase (308 aa).

Cys-142 serves as the catalytic Acyl-thioester intermediate. Substrate is bound by residues Lys-163 and Ser-192. The active-site Proton acceptor is the His-235. Residue Glu-237 is part of the active site. Arg-249 serves as a coordination point for substrate.

It belongs to the MetA family.

Its subcellular location is the cytoplasm. The catalysed reaction is L-homoserine + acetyl-CoA = O-acetyl-L-homoserine + CoA. Its pathway is amino-acid biosynthesis; L-methionine biosynthesis via de novo pathway; O-acetyl-L-homoserine from L-homoserine: step 1/1. Its function is as follows. Transfers an acetyl group from acetyl-CoA to L-homoserine, forming acetyl-L-homoserine. The protein is Homoserine O-acetyltransferase of Agrobacterium fabrum (strain C58 / ATCC 33970) (Agrobacterium tumefaciens (strain C58)).